We begin with the raw amino-acid sequence, 283 residues long: Formamidopyrimidine-DNA glycosylase (283 aa).

P2 functions as the Schiff-base intermediate with DNA in the catalytic mechanism. The active-site Proton donor is the E3. The active-site Proton donor; for beta-elimination activity is K60. DNA-binding residues include H100, R119, and R164. The FPG-type zinc-finger motif lies at 249 to 283 (WVYNRAGEPCKVCGDVIQRIKLGGRSSHFCRQCQV). R273 functions as the Proton donor; for delta-elimination activity in the catalytic mechanism.

Belongs to the FPG family. As to quaternary structure, monomer. The cofactor is Zn(2+).

It catalyses the reaction Hydrolysis of DNA containing ring-opened 7-methylguanine residues, releasing 2,6-diamino-4-hydroxy-5-(N-methyl)formamidopyrimidine.. The enzyme catalyses 2'-deoxyribonucleotide-(2'-deoxyribose 5'-phosphate)-2'-deoxyribonucleotide-DNA = a 3'-end 2'-deoxyribonucleotide-(2,3-dehydro-2,3-deoxyribose 5'-phosphate)-DNA + a 5'-end 5'-phospho-2'-deoxyribonucleoside-DNA + H(+). In terms of biological role, involved in base excision repair of DNA damaged by oxidation or by mutagenic agents. Acts as a DNA glycosylase that recognizes and removes damaged bases. Has a preference for oxidized purines, such as 7,8-dihydro-8-oxoguanine (8-oxoG). Has AP (apurinic/apyrimidinic) lyase activity and introduces nicks in the DNA strand. Cleaves the DNA backbone by beta-delta elimination to generate a single-strand break at the site of the removed base with both 3'- and 5'-phosphates. This chain is Formamidopyrimidine-DNA glycosylase, found in Nostoc sp. (strain PCC 7120 / SAG 25.82 / UTEX 2576).